The primary structure comprises 353 residues: Histidinol-phosphate aminotransferase (353 aa).

Lys-218 is modified (N6-(pyridoxal phosphate)lysine).

Belongs to the class-II pyridoxal-phosphate-dependent aminotransferase family. Histidinol-phosphate aminotransferase subfamily. As to quaternary structure, homodimer. Pyridoxal 5'-phosphate serves as cofactor.

It catalyses the reaction L-histidinol phosphate + 2-oxoglutarate = 3-(imidazol-4-yl)-2-oxopropyl phosphate + L-glutamate. It participates in amino-acid biosynthesis; L-histidine biosynthesis; L-histidine from 5-phospho-alpha-D-ribose 1-diphosphate: step 7/9. The polypeptide is Histidinol-phosphate aminotransferase (Synechococcus sp. (strain JA-3-3Ab) (Cyanobacteria bacterium Yellowstone A-Prime)).